Consider the following 260-residue polypeptide: Proliferating cell nuclear antigen (260 aa).

Residues 61–80 (RCDRNLAMGVNLSSMSKILK) mediate DNA binding. Lys-164 is covalently cross-linked (Glycyl lysine isopeptide (Lys-Gly) (interchain with G-Cter in ubiquitin)).

Belongs to the PCNA family. Homotrimer. Forms a complex with activator 1 heteropentamer in the presence of ATP. Component of the replisome complex. Monoubiquitinated by the ube2b-rad18 complex on Lys-164. Monoubiquitination at Lys-164 also takes place in undamaged proliferating cells, and is mediated by the dcx(dtl) complex, leading to enhance PCNA-dependent translesion DNA synthesis.

The protein localises to the nucleus. Its function is as follows. This protein is an auxiliary protein of DNA polymerase delta and is involved in the control of eukaryotic DNA replication by increasing the polymerase's processibility during elongation of the leading strand. The chain is Proliferating cell nuclear antigen (pcna) from Haplochromis burtoni (Burton's mouthbrooder).